We begin with the raw amino-acid sequence, 157 residues long: Endoribonuclease YbeY (157 aa).

Zn(2+) is bound by residues His-111, His-115, and His-121.

It belongs to the endoribonuclease YbeY family. Zn(2+) serves as cofactor.

Its subcellular location is the cytoplasm. Functionally, single strand-specific metallo-endoribonuclease involved in late-stage 70S ribosome quality control and in maturation of the 3' terminus of the 16S rRNA. The polypeptide is Endoribonuclease YbeY (Pseudomonas putida (strain W619)).